Reading from the N-terminus, the 379-residue chain is Omega-3 fatty acid desaturase, endoplasmic reticulum (379 aa).

A helical transmembrane segment spans residues 52–72; the sequence is LSYVVRDVIFVATLIGIAIHL. Positions 97-101 match the Histidine box-1 motif; the sequence is HDCGH. The short motif at 133–137 is the Histidine box-2 element; it reads HKTHH. A run of 2 helical transmembrane segments spans residues 213 to 233 and 236 to 256; these read TLCW…FGSL and FKIY…VTYL. The Histidine box-3 signature appears at 300–304; the sequence is HVIHH.

This sequence belongs to the fatty acid desaturase type 1 family.

The protein localises to the endoplasmic reticulum membrane. Its pathway is lipid metabolism; polyunsaturated fatty acid biosynthesis. In terms of biological role, ER (microsomal) omega-3 fatty acid desaturase introduces the third double bond in the biosynthesis of 18:3 fatty acids, important constituents of plant membranes. It is thought to use cytochrome b5 as an electron donor and to act on fatty acids esterified to phosphatidylcholine and, possibly, other phospholipids. The sequence is that of Omega-3 fatty acid desaturase, endoplasmic reticulum (FAD3) from Nicotiana tabacum (Common tobacco).